The chain runs to 1077 residues: MLRAVLQANKNGVPLSKLQAEYKSFTGEPIPFKDMGFHALDAYLKSIPSVVRIEVSRVGEVICYAVVCKETARIAALVAHQRSSKKKSGGQVNCQMRLKYTAPVSHFGKPKATLRQPGFTPPQEKIIRKPVPTSAWGKGNTFGSRTFEYSPPPIPQLFGIAPIQMHLPNINRPERKVTLPPRFQREVNSFLNPTPMTDSNANHTQSLKSVVPGSGQPRCDLSVIQNNLKELLNKHSNGLWLSKLPQLYKETYKQDLGGEMLKQVPSWTHICMVQKLVTMGHTEMVLYSTAIKQPSFTKNVQNHSNNQAKPNVPVDSTPSSPPLQSSGNIPKDELKQKISKVLTKYSNGLWYHALPKVFEDMFKQKLPTEVLNLDSLTDICTVDLISEEPFKAILYAKSAERANQNSNPSVNNNIPQKLQDRESPLLPEEPEMNMTPPPLVIPSEASPSVLVVELSSTNDVVIRYIGRDYSAAQEHMEDEMKDFCSKSSTAKIGFLRVGQLVAAKAEEDVWLRAQISAIEGKKVKVCYVDYGFSEIVDITKVCKLGKQFYTLPFQATKCRLAGLEAFCDDSIIIKALELKACGKILAVEILEKSEKPLVVLYDTSGDDDININAACLKELCDRSLSLQLKANSSFSNVIVTNVCSDGTLFCQLPSKGLAKLYETLQKVDSEFQSKQVTSHLYVSLPFCGKICLYHYKGKWARVEITSVHSSRALDVQFLDSGTIASVKVSELKEIPPPLLRDLISIPPQALRCCLADLPLRIGMWTPDAVLWLRNTVLNCLECSIRVVKVDEATNMVHIYLFTSNNFPDLERSINRQITNEELWKHQKDVFLNLSASTLESSRGGGAQASELSPPGLCKDHTSAVKKPDMQQSSSVPSFNMPPPLPLPRPGEHMDVFVSVACHPGHFVCQPWQELHKLEVVMEEMLLHYSTTEEKPVALEKNKLYAAKVENKWYRVLVKGILTNGLVSVYELDYGRHELVSCRKVQPLIEKFMQLPFQAITSQLAGVSCEHWSEEASIVFRNHVEKKPLVALVQTIHESTHPWDRRAVAYIVDTSLPDTDIWIHELMTEYHIQLSKPE.

2 consecutive HTH OST-type domains span residues 1–67 (MLRA…YAVV) and 220–289 (DLSV…LYST). Positions 300–328 (VQNHSNNQAKPNVPVDSTPSSPPLQSSGN) are enriched in polar residues. Positions 300-331 (VQNHSNNQAKPNVPVDSTPSSPPLQSSGNIPK) are disordered. The HTH OST-type 3 domain maps to 330-398 (PKDELKQKIS…PFKAILYAKS (69 aa)). 2 Tudor domains span residues 494 to 551 (FLRV…FYTL) and 684 to 741 (LPFC…LLRD). The interval 841 to 883 (SRGGGAQASELSPPGLCKDHTSAVKKPDMQQSSSVPSFNMPPP) is disordered. Over residues 857 to 868 (CKDHTSAVKKPD) the composition is skewed to basic and acidic residues.

The protein belongs to the TDRD7 family.

The protein localises to the cytoplasm. Functionally, component of specific cytoplasmic RNA granules involved in post-transcriptional regulation of specific genes: probably acts by binding to specific mRNAs and regulating their translation. Probably required during spermatogenesis. The polypeptide is Tudor domain-containing protein 7 (tdrd7) (Xenopus tropicalis (Western clawed frog)).